A 338-amino-acid polypeptide reads, in one-letter code: Fe-S cluster assembly protein DRE2 (338 aa).

Residues 1–165 (MAKSGLLLIH…LPSFKKAANK (165 aa)) are N-terminal SAM-like domain. A linker region spans residues 166–232 (PLPTFKKKVE…DDLLNEEDAK (67 aa)). The segment at 181–223 (VEARVHKAENDDDELEDEEDENLFDASRSKYFDEDDSESLDED) is disordered. 2 stretches are compositionally biased toward acidic residues: residues 190 to 203 (NDDD…DENL) and 213 to 223 (DEDDSESLDED). [2Fe-2S] cluster-binding residues include Cys242, Cys253, Cys256, and Cys258. Residues 242–258 (CGKSKTKKKKACKDCSC) form a fe-S binding site A region. Residues Cys301, Cys304, Cys312, and Cys315 each contribute to the [4Fe-4S] cluster site. Short sequence motifs (cx2C motif) lie at residues 301 to 304 (CGSC) and 312 to 315 (CTGC). A fe-S binding site B region spans residues 301–315 (CGSCSLGDAFRCTGC).

The protein belongs to the anamorsin family. Monomer. Interacts with TAH18. Interacts with MIA40. Requires [2Fe-2S] cluster as cofactor. [4Fe-4S] cluster is required as a cofactor.

The protein localises to the cytoplasm. It is found in the mitochondrion intermembrane space. Functionally, component of the cytosolic iron-sulfur (Fe-S) protein assembly (CIA) machinery required for the maturation of extramitochondrial Fe-S proteins. Part of an electron transfer chain functioning in an early step of cytosolic Fe-S biogenesis, facilitating the de novo assembly of a [4Fe-4S] cluster on the scaffold complex CFD1-NBP35. Electrons are transferred to DRE2 from NADPH via the FAD- and FMN-containing protein TAH18. TAH18-DRE2 are also required for the assembly of the diferric tyrosyl radical cofactor of ribonucleotide reductase (RNR), probably by providing electrons for reduction during radical cofactor maturation in the catalytic small subunit RNR2. The protein is Fe-S cluster assembly protein DRE2 of Candida glabrata (strain ATCC 2001 / BCRC 20586 / JCM 3761 / NBRC 0622 / NRRL Y-65 / CBS 138) (Yeast).